Consider the following 243-residue polypeptide: Ubiquinone biosynthesis O-methyltransferase (243 aa).

Residues Arg-45, Gly-65, Asp-86, and Leu-130 each contribute to the S-adenosyl-L-methionine site.

Belongs to the methyltransferase superfamily. UbiG/COQ3 family.

The enzyme catalyses a 3-demethylubiquinol + S-adenosyl-L-methionine = a ubiquinol + S-adenosyl-L-homocysteine + H(+). It catalyses the reaction a 3-(all-trans-polyprenyl)benzene-1,2-diol + S-adenosyl-L-methionine = a 2-methoxy-6-(all-trans-polyprenyl)phenol + S-adenosyl-L-homocysteine + H(+). It participates in cofactor biosynthesis; ubiquinone biosynthesis. O-methyltransferase that catalyzes the 2 O-methylation steps in the ubiquinone biosynthetic pathway. The chain is Ubiquinone biosynthesis O-methyltransferase from Idiomarina loihiensis (strain ATCC BAA-735 / DSM 15497 / L2-TR).